The chain runs to 440 residues: ATP-dependent protease ATPase subunit HslU (440 aa).

Residues I18, 60–65 (GVGKTE), D252, E318, and R390 contribute to the ATP site.

This sequence belongs to the ClpX chaperone family. HslU subfamily. As to quaternary structure, a double ring-shaped homohexamer of HslV is capped on each side by a ring-shaped HslU homohexamer. The assembly of the HslU/HslV complex is dependent on binding of ATP.

The protein localises to the cytoplasm. Functionally, ATPase subunit of a proteasome-like degradation complex; this subunit has chaperone activity. The binding of ATP and its subsequent hydrolysis by HslU are essential for unfolding of protein substrates subsequently hydrolyzed by HslV. HslU recognizes the N-terminal part of its protein substrates and unfolds these before they are guided to HslV for hydrolysis. The protein is ATP-dependent protease ATPase subunit HslU of Acidithiobacillus ferrooxidans (strain ATCC 23270 / DSM 14882 / CIP 104768 / NCIMB 8455) (Ferrobacillus ferrooxidans (strain ATCC 23270)).